Consider the following 419-residue polypeptide: uncharacterized protein (419 aa).

11 helical membrane-spanning segments follow: residues 1-21, 24-44, 66-86, 101-121, 174-194, 216-236, 242-262, 280-300, 311-331, 349-369, and 396-416; these read MTTVSAIGALVALIVAIFLIL, VSPAYGMLVGALVGGLIGGAD, ILAAGVLAGVLIESGAANSIT, ALALATMILTAVGVFVDVAVI, SVMMAGIIPALFGLILTYFLA, NLPSFLTALVAPLVAILLLAL, IKVDPLIALPLGGLIGAFCMG, PVAIMLLGTGALAGIIANSGL, SGLPSYILAPISGVLMSLATA, LELGVSSLAGAAMIHAGATVF, and IPYESAVGLMMTIVSTLIFGV.

Belongs to the CitM (TC 2.A.11) transporter family.

The protein resides in the cell membrane. This is an uncharacterized protein from Haemophilus influenzae (strain ATCC 51907 / DSM 11121 / KW20 / Rd).